Consider the following 261-residue polypeptide: Probable electron transfer flavoprotein subunit beta (261 aa).

Ser-2 is subject to N-acetylserine.

The protein belongs to the ETF beta-subunit/FixA family. In terms of assembly, heterodimer of an alpha and a beta subunit. Interacts with YFH1. It depends on FAD as a cofactor. Requires AMP as cofactor.

It localises to the mitochondrion matrix. The electron transfer flavoprotein serves as a specific electron acceptor for several dehydrogenases, including five acyl-CoA dehydrogenases, glutaryl-CoA and sarcosine dehydrogenase. It transfers the electrons to the main mitochondrial respiratory chain via ETF-ubiquinone oxidoreductase (ETF dehydrogenase). This Saccharomyces cerevisiae (strain ATCC 204508 / S288c) (Baker's yeast) protein is Probable electron transfer flavoprotein subunit beta (CIR1).